Consider the following 158-residue polypeptide: Ribosomal RNA large subunit methyltransferase H (158 aa).

Residues Leu74, Gly105, and Leu124–Leu129 each bind S-adenosyl-L-methionine.

Belongs to the RNA methyltransferase RlmH family. In terms of assembly, homodimer.

The protein resides in the cytoplasm. It carries out the reaction pseudouridine(1915) in 23S rRNA + S-adenosyl-L-methionine = N(3)-methylpseudouridine(1915) in 23S rRNA + S-adenosyl-L-homocysteine + H(+). Functionally, specifically methylates the pseudouridine at position 1915 (m3Psi1915) in 23S rRNA. The polypeptide is Ribosomal RNA large subunit methyltransferase H (Xylella fastidiosa (strain Temecula1 / ATCC 700964)).